The following is a 160-amino-acid chain: Protein max (160 aa).

Acidic residues predominate over residues 1-13; that stretch reads MSDNDDIEVESDE. A disordered region spans residues 1 to 40; that stretch reads MSDNDDIEVESDEEQPRFQSAADKRAHHNALERKRRDHIK. Residue serine 2 is modified to N-acetylserine. Phosphoserine occurs at positions 2 and 11. One can recognise a bHLH domain in the interval 23-74; it reads DKRAHHNALERKRRDHIKDSFHSLRDSVPSLQGEKASRAQILDKATEYIQYM. The span at 29 to 40 shows a compositional bias: basic and acidic residues; that stretch reads NALERKRRDHIK. Lysine 66 carries the N6-acetyllysine modification. The tract at residues 81–102 is leucine-zipper; the sequence is HQQDIDDLKRQNALLEQQVRAL. A disordered region spans residues 104 to 160; it reads KARSSAQLQTNYPSSDNSLYTNAKGGTISAFDGGSDSSSESEPEEPQSRKKLRMEAS. The residue at position 107 (serine 107) is a Phosphoserine. The segment covering 107 to 124 has biased composition (polar residues); it reads SSAQLQTNYPSSDNSLYT. N6-acetyllysine is present on residues lysine 153 and lysine 154.

This sequence belongs to the MAX family. Efficient DNA binding requires dimerization with another bHLH protein. Binds DNA as a heterodimer with MYC or MAD. Part of the E2F6.com-1 complex in G0 phase composed of E2F6, MGA, MAX, TFDP1, CBX3, BAT8, EUHMTASE1, RING1, RNF2, MBLR, L3MBTL2 and YAF2. Component of some MLL1/MLL complex, at least composed of the core components KMT2A/MLL1, ASH2L, HCFC1/HCF1, WDR5 and RBBP5, as well as the facultative components BACC1, CHD8, E2F6, HSP70, INO80C, KANSL1, LAS1L, MAX, MCRS1, MGA, MYST1/MOF, PELP1, PHF20, PRP31, RING2, RUVB1/TIP49A, RUVB2/TIP49B, SENP3, TAF1, TAF4, TAF6, TAF7, TAF9 and TEX10. Interacts with SPAG9. The heterodimer MYC:MAX interacts with ABI1; the interaction may enhance MYC:MAX transcriptional activity. Post-translationally, phosphorylated.

The protein resides in the nucleus. It localises to the cell projection. Its subcellular location is the dendrite. Transcription regulator. Forms a sequence-specific DNA-binding protein complex with MYC or MAD which recognizes the core sequence 5'-CAC[GA]TG-3'. The MYC:MAX complex is a transcriptional activator, whereas the MAD:MAX complex is a repressor. CpG methylation of the recognition site greatly inhibits DNA binding, suggesting that DNA methylation may regulate the MYC:MAX complex in vivo. May repress transcription via the recruitment of a chromatin remodeling complex containing H3 'Lys-9' histone methyltransferase activity. Represses MYC transcriptional activity from E-box elements. This chain is Protein max, found in Mus musculus (Mouse).